The chain runs to 102 residues: Protein RnfH (102 aa).

Belongs to the UPF0125 (RnfH) family.

In Haemophilus influenzae (strain 86-028NP), this protein is Protein RnfH.